Consider the following 147-residue polypeptide: Large ribosomal subunit protein uL13 (147 aa).

The protein belongs to the universal ribosomal protein uL13 family. Part of the 50S ribosomal subunit.

Its function is as follows. This protein is one of the early assembly proteins of the 50S ribosomal subunit, although it is not seen to bind rRNA by itself. It is important during the early stages of 50S assembly. The polypeptide is Large ribosomal subunit protein uL13 (Streptomyces avermitilis (strain ATCC 31267 / DSM 46492 / JCM 5070 / NBRC 14893 / NCIMB 12804 / NRRL 8165 / MA-4680)).